The chain runs to 233 residues: Octanoyltransferase (233 aa).

Residues 33-216 (GRAQDTVILL…HLVRALSSNG (184 aa)) form the BPL/LPL catalytic domain. Residues 71–78 (RGGRITWH), 146–148 (AIG), and 159–161 (GFA) contribute to the substrate site. Cys-177 functions as the Acyl-thioester intermediate in the catalytic mechanism.

It belongs to the LipB family.

It localises to the cytoplasm. The enzyme catalyses octanoyl-[ACP] + L-lysyl-[protein] = N(6)-octanoyl-L-lysyl-[protein] + holo-[ACP] + H(+). It functions in the pathway protein modification; protein lipoylation via endogenous pathway; protein N(6)-(lipoyl)lysine from octanoyl-[acyl-carrier-protein]: step 1/2. In terms of biological role, catalyzes the transfer of endogenously produced octanoic acid from octanoyl-acyl-carrier-protein onto the lipoyl domains of lipoate-dependent enzymes. Lipoyl-ACP can also act as a substrate although octanoyl-ACP is likely to be the physiological substrate. In Clavibacter michiganensis subsp. michiganensis (strain NCPPB 382), this protein is Octanoyltransferase.